Consider the following 482-residue polypeptide: UDP-N-acetylmuramate--L-alanine ligase (482 aa).

129 to 135 (GTHGKTT) is a binding site for ATP.

The protein belongs to the MurCDEF family.

It is found in the cytoplasm. It carries out the reaction UDP-N-acetyl-alpha-D-muramate + L-alanine + ATP = UDP-N-acetyl-alpha-D-muramoyl-L-alanine + ADP + phosphate + H(+). The protein operates within cell wall biogenesis; peptidoglycan biosynthesis. In terms of biological role, cell wall formation. In Acinetobacter baylyi (strain ATCC 33305 / BD413 / ADP1), this protein is UDP-N-acetylmuramate--L-alanine ligase.